A 567-amino-acid chain; its full sequence is Phenylalanine--tRNA ligase beta subunit (567 aa).

In terms of domain architecture, B5 spans 287–362 (YFQEEVEFNV…IGEGLASFHP (76 aa)). Mg(2+)-binding residues include aspartate 340, aspartate 346, glutamate 349, and aspartate 350.

This sequence belongs to the phenylalanyl-tRNA synthetase beta subunit family. Type 2 subfamily. Tetramer of two alpha and two beta subunits. Mg(2+) serves as cofactor.

It is found in the cytoplasm. It carries out the reaction tRNA(Phe) + L-phenylalanine + ATP = L-phenylalanyl-tRNA(Phe) + AMP + diphosphate + H(+). This chain is Phenylalanine--tRNA ligase beta subunit, found in Borreliella afzelii (strain PKo) (Borrelia afzelii).